The chain runs to 642 residues: Triacylglycerol lipase 3 (642 aa).

A PNPLA domain is found at 204–392 (LILQGGSLFG…NEIEPFLNIN (189 aa)). A GXSXG motif is present at residues 235 to 239 (GSSMG). S237 serves as the catalytic Nucleophile. The HXXXXD acyltransferase motif signature appears at 298–303 (HGYSQD). The active-site Proton acceptor is the E403. Residues 471–481 (RKTQRSSSQSP) show a composition bias toward polar residues. The tract at residues 471 to 502 (RKTQRSSSQSPIKAGTVEDLEPEPLMSPVPPS) is disordered.

It localises to the lipid droplet. The enzyme catalyses a triacylglycerol + H2O = a diacylglycerol + a fatty acid + H(+). It catalyses the reaction 1,2,3-tri-(9Z-octadecenoyl)-glycerol + H2O = di-(9Z)-octadecenoylglycerol + (9Z)-octadecenoate + H(+). It carries out the reaction di-(9Z)-octadecenoylglycerol + H2O = (9Z-octadecenoyl)-glycerol + (9Z)-octadecenoate + H(+). The catalysed reaction is a 1-acyl-sn-glycero-3-phosphoethanolamine + (9Z)-octadecenoyl-CoA = 1-acyl-2-(9Z)-octadecenoyl-sn-glycero-3-phosphoethanolamine + CoA. The enzyme catalyses a 1-acyl-sn-glycero-3-phosphoethanolamine + hexadecanoyl-CoA = 1-acyl-2-hexadecanoyl-sn-glycero-3-phosphoethanolamine + CoA. With respect to regulation, loses its lipolytic activity in cells lacking nonpolar lipids. Lipid particle-localized triacylglycerol (TAG) lipase. The lipid droplet/particle is a lipid storage compartment which serves as a depot of energy and building blocks for membrane lipid biosynthesis. Involved in the mobilization of the non-polar storage lipids triacylglycerols (TAGs) from lipid particles by hydrolysis of TAGs, releasing and supplying specific fatty acids to the appropriate metabolic pathways. Also catalyzes the acylation of lysophosphatidic acid (LPA). Important for efficient sporulation, but rather through its acyltransferase than lipase activity. This Saccharomyces cerevisiae (strain ATCC 204508 / S288c) (Baker's yeast) protein is Triacylglycerol lipase 3 (TGL3).